The sequence spans 682 residues: ATP-dependent zinc metalloprotease FtsH (682 aa).

Topologically, residues 1 to 7 (MKQSHKT) are cytoplasmic. Residues 8 to 28 (ILLWALLIFLFVMIYNLISDG) traverse the membrane as a helical segment. Residues 29 to 138 (TSGEETLDTT…YEVKAKEEST (110 aa)) are Periplasmic-facing. A helical membrane pass occupies residues 139–159 (FWQSLLISWLPMLLLFALFFF). Over 160-682 (FMRQLQAGGG…SGTDPEPEPA (523 aa)) the chain is Cytoplasmic. 232–239 (GPPGTGKT) is a binding site for ATP. His-454 contributes to the Zn(2+) binding site. Residue Glu-455 is part of the active site. Zn(2+) contacts are provided by His-458 and Asp-531. A disordered region spans residues 638 to 682 (LSRPAVVSKPSADAESSVDEDEREARPALFPPLGKSGTDPEPEPA).

The protein in the central section; belongs to the AAA ATPase family. This sequence in the C-terminal section; belongs to the peptidase M41 family. As to quaternary structure, homohexamer. It depends on Zn(2+) as a cofactor.

It is found in the cell inner membrane. In terms of biological role, acts as a processive, ATP-dependent zinc metallopeptidase for both cytoplasmic and membrane proteins. Plays a role in the quality control of integral membrane proteins. This Haliangium ochraceum (strain DSM 14365 / JCM 11303 / SMP-2) protein is ATP-dependent zinc metalloprotease FtsH.